The following is a 290-amino-acid chain: Acetyl-coenzyme A carboxylase carboxyl transferase subunit beta (290 aa).

Positions 27 to 290 (LWVKCPSCEA…LQRQPADALA (264 aa)) constitute a CoA carboxyltransferase N-terminal domain. Positions 31, 34, 50, and 53 each coordinate Zn(2+). A C4-type zinc finger spans residues 31-53 (CPSCEAVLYRNDVDANLHVCPKC).

This sequence belongs to the AccD/PCCB family. Acetyl-CoA carboxylase is a heterohexamer composed of biotin carboxyl carrier protein (AccB), biotin carboxylase (AccC) and two subunits each of ACCase subunit alpha (AccA) and ACCase subunit beta (AccD). Zn(2+) is required as a cofactor.

It localises to the cytoplasm. It carries out the reaction N(6)-carboxybiotinyl-L-lysyl-[protein] + acetyl-CoA = N(6)-biotinyl-L-lysyl-[protein] + malonyl-CoA. It participates in lipid metabolism; malonyl-CoA biosynthesis; malonyl-CoA from acetyl-CoA: step 1/1. In terms of biological role, component of the acetyl coenzyme A carboxylase (ACC) complex. Biotin carboxylase (BC) catalyzes the carboxylation of biotin on its carrier protein (BCCP) and then the CO(2) group is transferred by the transcarboxylase to acetyl-CoA to form malonyl-CoA. This chain is Acetyl-coenzyme A carboxylase carboxyl transferase subunit beta, found in Burkholderia multivorans (strain ATCC 17616 / 249).